Reading from the N-terminus, the 238-residue chain is Ethylene-responsive transcription factor ERN3 (238 aa).

A DNA-binding region (AP2/ERF) is located at residues 24–81 (KFVGVRQRASGKWAAEIKDTSKNIRMWLGTYKTAEEAARAYDEAAFLLRGTNTRTNFS).

It belongs to the AP2/ERF transcription factor family. ERF subfamily. In terms of tissue distribution, expressed in roots, root hairs and leaves.

Its subcellular location is the nucleus. In terms of biological role, transcription factor involved in symbiotic nodule signaling in response to rhizobial Nod factors (NFs). Binds to the GCC box (NF-responsive box) of ENOD11 promoter. May act as transcriptional repressor of NF-responsive box-containing target gene promoters in root hairs. The protein is Ethylene-responsive transcription factor ERN3 of Medicago truncatula (Barrel medic).